The sequence spans 446 residues: ATP synthase subunit b-delta (446 aa).

The interval 1–168 (MSTFIGQLVG…PKGADVEYPL (168 aa)) is ATP synthase subunit b. Residues 4–24 (FIGQLVGFAAIVYLVWWYVVP) form a helical membrane-spanning segment. The interval 169-446 (LAKMRSASRR…LVAAEAALPD (278 aa)) is ATP synthase subunit delta.

In the N-terminal section; belongs to the ATPase B chain family. This sequence in the C-terminal section; belongs to the ATPase delta chain family. As to quaternary structure, F-type ATPases have 2 components, F(1) - the catalytic core - and F(0) - the membrane proton channel. F(1) has five subunits: alpha(3), beta(3), gamma(1), delta(1), epsilon(1). F(0) has three main subunits: a(1), b(2) and c(10-14). The alpha and beta chains form an alternating ring which encloses part of the gamma chain. F(1) is attached to F(0) by a central stalk formed by the gamma and epsilon chains, while a peripheral stalk is formed by the delta and b chains.

It is found in the cell membrane. Its function is as follows. F(1)F(0) ATP synthase produces ATP from ADP in the presence of a proton or sodium gradient. F-type ATPases consist of two structural domains, F(1) containing the extramembraneous catalytic core and F(0) containing the membrane proton channel, linked together by a central stalk and a peripheral stalk. During catalysis, ATP synthesis in the catalytic domain of F(1) is coupled via a rotary mechanism of the central stalk subunits to proton translocation. This fusion protein includes a component of the F(0) channel (subunit b) and of the F(1) subunit (subunit delta). Two copies of subunit b and one of delta together form the peripheral 'stator' stalk which links F(1) to F(0). This chain is ATP synthase subunit b-delta (atpFH), found in Mycobacterium leprae (strain Br4923).